The primary structure comprises 651 residues: Macrolide export ATP-binding/permease protein MacB (651 aa).

An ABC transporter domain is found at 2–239; it reads IEIVNVTKTY…PQMPQGGMEA (238 aa). ATP is bound at residue 38–45; sequence GASGSGKS. A run of 4 helical transmembrane segments spans residues 269–289, 532–552, 589–609, and 614–634; these read FLSV…MALG, IAAI…LVSV, IIGI…AGWA, and MFSV…FGLW.

This sequence belongs to the ABC transporter superfamily. Macrolide exporter (TC 3.A.1.122) family. In terms of assembly, homodimer.

It is found in the cell inner membrane. Functionally, non-canonical ABC transporter that contains transmembrane domains (TMD), which form a pore in the inner membrane, and an ATP-binding domain (NBD), which is responsible for energy generation. Confers resistance against macrolides. In Chlorobaculum tepidum (strain ATCC 49652 / DSM 12025 / NBRC 103806 / TLS) (Chlorobium tepidum), this protein is Macrolide export ATP-binding/permease protein MacB.